A 231-amino-acid polypeptide reads, in one-letter code: MPTIAPLSSPPQSQEQLLAQARQLAGYSLGELAALAGIPIPRDLKRDKGWTGILLELWLGASAGSKPEQDFAALGVELKTIPIDSRGRPLETTFVCVAPLTGNSGVTWESSHVRHKLQRVLWIPVEGERTIPLAARRVGAPLLWSPDEDEERQLRMDWEELMDLIVLGEVERITARHGEVLQLRPKAANSKALTEAIGAHGETILTLPRGFYLKKNFTAALLARHFLLQHD.

Belongs to the MutH family.

It localises to the cytoplasm. Its function is as follows. Sequence-specific endonuclease that cleaves unmethylated GATC sequences. It is involved in DNA mismatch repair. This chain is DNA mismatch repair protein MutH, found in Klebsiella pneumoniae (strain 342).